The primary structure comprises 424 residues: Serine hydroxymethyltransferase (424 aa).

(6S)-5,6,7,8-tetrahydrofolate-binding positions include Leu118 and 122–124; that span reads GHL. At Lys227 the chain carries N6-(pyridoxal phosphate)lysine. Residues Glu243 and 351-353 contribute to the (6S)-5,6,7,8-tetrahydrofolate site; that span reads SPF.

It belongs to the SHMT family. In terms of assembly, homodimer. Pyridoxal 5'-phosphate is required as a cofactor.

Its subcellular location is the cytoplasm. It carries out the reaction (6R)-5,10-methylene-5,6,7,8-tetrahydrofolate + glycine + H2O = (6S)-5,6,7,8-tetrahydrofolate + L-serine. Its pathway is one-carbon metabolism; tetrahydrofolate interconversion. The protein operates within amino-acid biosynthesis; glycine biosynthesis; glycine from L-serine: step 1/1. Functionally, catalyzes the reversible interconversion of serine and glycine with tetrahydrofolate (THF) serving as the one-carbon carrier. This reaction serves as the major source of one-carbon groups required for the biosynthesis of purines, thymidylate, methionine, and other important biomolecules. Also exhibits THF-independent aldolase activity toward beta-hydroxyamino acids, producing glycine and aldehydes, via a retro-aldol mechanism. This Thermosipho africanus (strain TCF52B) protein is Serine hydroxymethyltransferase.